A 130-amino-acid chain; its full sequence is Phosphoribosyl-AMP cyclohydrolase (130 aa).

Asp-78 is a binding site for Mg(2+). Cys-79 contributes to the Zn(2+) binding site. The Mg(2+) site is built by Asp-80 and Asp-82. Residues Cys-96 and Cys-103 each contribute to the Zn(2+) site.

It belongs to the PRA-CH family. Homodimer. Requires Mg(2+) as cofactor. Zn(2+) serves as cofactor.

The protein localises to the cytoplasm. It carries out the reaction 1-(5-phospho-beta-D-ribosyl)-5'-AMP + H2O = 1-(5-phospho-beta-D-ribosyl)-5-[(5-phospho-beta-D-ribosylamino)methylideneamino]imidazole-4-carboxamide. The protein operates within amino-acid biosynthesis; L-histidine biosynthesis; L-histidine from 5-phospho-alpha-D-ribose 1-diphosphate: step 3/9. In terms of biological role, catalyzes the hydrolysis of the adenine ring of phosphoribosyl-AMP. In Methylobacillus flagellatus (strain ATCC 51484 / DSM 6875 / VKM B-1610 / KT), this protein is Phosphoribosyl-AMP cyclohydrolase.